We begin with the raw amino-acid sequence, 737 residues long: Ribosome-releasing factor 2, mitochondrial (737 aa).

The transit peptide at M1–Y29 directs the protein to the mitochondrion. One can recognise a tr-type G domain in the interval S31–E310. GTP is bound by residues A40–T47, D104–H108, and N158–D161.

It belongs to the TRAFAC class translation factor GTPase superfamily. Classic translation factor GTPase family. EF-G/EF-2 subfamily.

The protein localises to the mitochondrion. Functionally, mitochondrial GTPase that mediates the disassembly of ribosomes from messenger RNA at the termination of mitochondrial protein biosynthesis. Not involved in the GTP-dependent ribosomal translocation step during translation elongation. The sequence is that of Ribosome-releasing factor 2, mitochondrial from Drosophila pseudoobscura pseudoobscura (Fruit fly).